The following is a 290-amino-acid chain: Nucleotide-binding protein LAR_0375 (290 aa).

An ATP-binding site is contributed by 13–20 (GMSGAGKT). 63 to 66 (DMRS) provides a ligand contact to GTP.

The protein belongs to the RapZ-like family.

Functionally, displays ATPase and GTPase activities. This chain is Nucleotide-binding protein LAR_0375, found in Limosilactobacillus reuteri subsp. reuteri (strain JCM 1112) (Lactobacillus reuteri).